Consider the following 470-residue polypeptide: Ribulose bisphosphate carboxylase large chain (470 aa).

Substrate contacts are provided by Asn-118 and Thr-168. Lys-170 acts as the Proton acceptor in catalysis. Position 172 (Lys-172) interacts with substrate. Mg(2+)-binding residues include Lys-196, Asp-198, and Glu-199. Lys-196 is subject to N6-carboxylysine. The active-site Proton acceptor is His-289. Positions 290, 322, and 374 each coordinate substrate. Residues 459 to 465 (EIKFEFD) carry the Interacts with RbcX2 motif.

It belongs to the RuBisCO large chain family. Type I subfamily. Heterohexadecamer of 8 large chains and 8 small chains; disulfide-linked. The disulfide link is formed within the large subunit homodimers. Mg(2+) is required as a cofactor. The disulfide bond which can form in the large chain dimeric partners within the hexadecamer appears to be associated with oxidative stress and protein turnover.

The protein localises to the carboxysome. The enzyme catalyses 2 (2R)-3-phosphoglycerate + 2 H(+) = D-ribulose 1,5-bisphosphate + CO2 + H2O. It carries out the reaction D-ribulose 1,5-bisphosphate + O2 = 2-phosphoglycolate + (2R)-3-phosphoglycerate + 2 H(+). Functionally, ruBisCO catalyzes two reactions: the carboxylation of D-ribulose 1,5-bisphosphate, the primary event in carbon dioxide fixation, as well as the oxidative fragmentation of the pentose substrate in the photorespiration process. Both reactions occur simultaneously and in competition at the same active site. The protein is Ribulose bisphosphate carboxylase large chain of Picosynechococcus sp. (strain ATCC 27264 / PCC 7002 / PR-6) (Agmenellum quadruplicatum).